A 440-amino-acid polypeptide reads, in one-letter code: Deoxyguanosinetriphosphate triphosphohydrolase-like protein (440 aa).

The HD domain occupies 61-256 (RLIHSLEVSC…MEAADDLCYS (196 aa)).

It belongs to the dGTPase family. Type 3 subfamily.

This chain is Deoxyguanosinetriphosphate triphosphohydrolase-like protein, found in Synechocystis sp. (strain ATCC 27184 / PCC 6803 / Kazusa).